The sequence spans 204 residues: FMN-dependent NADH:quinone oxidoreductase (204 aa).

Ser9 is a binding site for FMN.

The protein belongs to the azoreductase type 1 family. In terms of assembly, homodimer. It depends on FMN as a cofactor.

It catalyses the reaction 2 a quinone + NADH + H(+) = 2 a 1,4-benzosemiquinone + NAD(+). The catalysed reaction is N,N-dimethyl-1,4-phenylenediamine + anthranilate + 2 NAD(+) = 2-(4-dimethylaminophenyl)diazenylbenzoate + 2 NADH + 2 H(+). Functionally, quinone reductase that provides resistance to thiol-specific stress caused by electrophilic quinones. Also exhibits azoreductase activity. Catalyzes the reductive cleavage of the azo bond in aromatic azo compounds to the corresponding amines. This is FMN-dependent NADH:quinone oxidoreductase from Thiobacillus denitrificans (strain ATCC 25259 / T1).